Here is a 1048-residue protein sequence, read N- to C-terminus: MDPVVRKPDPGGVQHRVTKALRAIVGHACRHPIHTLLVTALTAATTHLHVLEGTYQATHRGLAPWAKETPLNVQSFLWGSRTVSLGEASAWKWQIDDRPKVPEDGQSDFHWALVTLDLPGASVDASIPFLSNTLSGFLGAEQTTPTPDSSPSPDHSALTFRVPYSQLDGFLQAVEIIPSEKEDDSWRLRSPREEGSPRSLGHWLGSSWLSFLHRVHHAETVDLVIIGLSYLAMNMTVVSLFRVMRHLGSRFWLAASVLLSGAFAFVLGLGITTTCDVPVDMLLLFEGIPYLVLTVGFEKPIQLTRAVLCVSEELWGGGQRQVPNGASSDDSRQNQLIPNIIQLAVDREGWYIVRSYLLEIGALALGAVLRPKDSLGHFCFLAAWTLLIDAVLLFTFYATILCVKLEITRIRSPGGLGQVNAKHPSGIFGHKVKSTNITWWKLLTVGGFVLCHFLQLSPFFYRVMGEYMANGTLPPTAVSPFKEAANGLNEIYLTARVEGFETRVTVLPPLQYVLESAGFNISATKRSTFDGVLDGLESPLGRLCLMGALVVSLVLNNHLIHAARWHAWPQARESAVPDGSYLSVPCSATAPEVCTRPPEETEALLKSNQAESLTDDELVELCLRGKIAGYSLEKTLERIAAGSSRSVTRLEAFTRAVRIRRAAVSKTPSTQNLCSGLAESLLPYRDYNYELVHGACCENVVGYLPLPLGVAGPMVIDGQALFIPMATTEGVLVASASRGCKAINAGGGATTMLKGDGMTRGPCLRFPSAQRAAEAQRWVESPLGHEVLAAAFNATSRFARLQTLTVAQAGIYLYIRFRTTTGDAMGMNMISKGVEKALEAMAAEGGFPDMHTVTLSGNFCSDKKSAAINWIGGRGKSVIAEATIPAETVRQVLKTDVDALVELNTAKNLVGSAMAGSLGGFNAHASNLVQAVFLATGQDPAQNVESSSCITTMKNIDGNLHIAVSMPSMEVGTIGGGTILEAQGAMLDLLGVRGAHSTEPGANARRLARIVAAAVLAGELSTCAALAAGHLVNAHMQHNRSAGATVKK.

Topologically, residues 1–32 are cytoplasmic; that stretch reads MDPVVRKPDPGGVQHRVTKALRAIVGHACRHP. Residues 33–53 form a helical membrane-spanning segment; it reads IHTLLVTALTAATTHLHVLEG. At 54–220 the chain is on the lumenal side; the sequence is TYQATHRGLA…FLHRVHHAET (167 aa). The helical transmembrane segment at 221-241 threads the bilayer; the sequence is VDLVIIGLSYLAMNMTVVSLF. The SSD domain maps to 222–403; it reads DLVIIGLSYL…FTFYATILCV (182 aa). Over 242–250 the chain is Cytoplasmic; it reads RVMRHLGSR. Residues 251-271 traverse the membrane as a helical segment; the sequence is FWLAASVLLSGAFAFVLGLGI. At 272-276 the chain is on the lumenal side; sequence TTTCD. A helical transmembrane segment spans residues 277-297; that stretch reads VPVDMLLLFEGIPYLVLTVGF. Residues 298 to 348 lie on the Cytoplasmic side of the membrane; it reads EKPIQLTRAVLCVSEELWGGGQRQVPNGASSDDSRQNQLIPNIIQLAVDRE. A helical membrane pass occupies residues 349 to 369; that stretch reads GWYIVRSYLLEIGALALGAVL. Over 370-377 the chain is Lumenal; that stretch reads RPKDSLGH. The chain crosses the membrane as a helical span at residues 378–398; that stretch reads FCFLAAWTLLIDAVLLFTFYA. Residues 399–439 are Cytoplasmic-facing; the sequence is TILCVKLEITRIRSPGGLGQVNAKHPSGIFGHKVKSTNITW. A helical transmembrane segment spans residues 440–460; the sequence is WKLLTVGGFVLCHFLQLSPFF. Residues 461–542 are Lumenal-facing; sequence YRVMGEYMAN…LDGLESPLGR (82 aa). N-linked (GlcNAc...) asparagine glycans are attached at residues Asn-470 and Asn-520. Residues 543–563 form a helical membrane-spanning segment; the sequence is LCLMGALVVSLVLNNHLIHAA. At 564–1048 the chain is on the cytoplasmic side; that stretch reads RWHAWPQARE…NRSAGATVKK (485 aa). Residue Glu-729 is the Charge relay system of the active site. CoA is bound at residue 735 to 741; the sequence is SASRGCK. Residues 796–798 and 823–831 each bind NADP(+); these read SRF and DAMGMNMIS. Catalysis depends on Lys-863, which acts as the Charge relay system. 892–894 lines the CoA pocket; that stretch reads VLK. Asp-939 functions as the Charge relay system in the catalytic mechanism. 1034-1035 is a binding site for CoA; sequence AH. His-1035 functions as the Proton donor in the catalytic mechanism. 1039–1040 is a binding site for NADP(+); sequence NR.

Belongs to the HMG-CoA reductase family.

It is found in the endoplasmic reticulum membrane. The enzyme catalyses (R)-mevalonate + 2 NADP(+) + CoA = (3S)-3-hydroxy-3-methylglutaryl-CoA + 2 NADPH + 2 H(+). It functions in the pathway metabolic intermediate biosynthesis; (R)-mevalonate biosynthesis; (R)-mevalonate from acetyl-CoA: step 3/3. In terms of biological role, HMG-CoA reductase; part of the first module of ergosterol biosynthesis pathway that includes the early steps of the pathway, conserved across all eukaryotes, and which results in the formation of mevalonate from acetyl-coenzyme A (acetyl-CoA). In this module, the cytosolic acetyl-CoA acetyltransferase catalyzes the formation of acetoacetyl-CoA. The hydroxymethylglutaryl-CoA synthase then condenses acetyl-CoA with acetoacetyl-CoA to form HMG-CoA. The rate-limiting step of the early module is the reduction to mevalonate by the 3-hydroxy-3-methylglutaryl-coenzyme A (HMG-CoA) reductase. This Aspergillus terreus protein is 3-hydroxy-3-methylglutaryl-coenzyme A reductase.